The following is a 329-amino-acid chain: Phosphate acetyltransferase (329 aa).

Belongs to the phosphate acetyltransferase and butyryltransferase family.

It localises to the cytoplasm. The catalysed reaction is acetyl-CoA + phosphate = acetyl phosphate + CoA. It participates in metabolic intermediate biosynthesis; acetyl-CoA biosynthesis; acetyl-CoA from acetate: step 2/2. The polypeptide is Phosphate acetyltransferase (pta) (Corynebacterium glutamicum (strain ATCC 13032 / DSM 20300 / JCM 1318 / BCRC 11384 / CCUG 27702 / LMG 3730 / NBRC 12168 / NCIMB 10025 / NRRL B-2784 / 534)).